The chain runs to 364 residues: DNA replication and repair protein RecF (364 aa).

30 to 37 (GLNAQGKS) is a binding site for ATP.

It belongs to the RecF family.

The protein resides in the cytoplasm. The RecF protein is involved in DNA metabolism; it is required for DNA replication and normal SOS inducibility. RecF binds preferentially to single-stranded, linear DNA. It also seems to bind ATP. The sequence is that of DNA replication and repair protein RecF from Caldanaerobacter subterraneus subsp. tengcongensis (strain DSM 15242 / JCM 11007 / NBRC 100824 / MB4) (Thermoanaerobacter tengcongensis).